The following is a 410-amino-acid chain: MEKLVERFLNYVTFDTKSDPSNQQCPSSPGQITFAEALKLELVALDLVDVSLDDNGYLMAKLPSNVDYPVPAIGFVAHMDTAPDASGANVKPQVIKDYRGGTIELGESGESLSPSQYPDLDSLHGHDLITTDGTTLLGADNKAGIAEIISAIAYLKANPDIKHGDICIGFTPDEEIGRGANLFDVEKFGAEWAYTIDGGPVGELEFENFNATSADVICHGVNVHPGTAKGKMVNSMNIAAQFQLMMPAQETPECTEGYEGFYHLKSAEMGVARSELGYIIRDFEREGVEARKAVMQQKVDELNERLEKGRVELVLTDSYFNMKEMVEPHQHIIELAKQAMIECDVEPMIKPIRGGTDGARLSFMGLPCPNIFTGGYNFHGIHEFITIQGMEQAVKVIVELSQRTATHYQK.

Histidine 78 is a binding site for Zn(2+). Residue aspartate 80 is part of the active site. Aspartate 140 is a binding site for Zn(2+). Glutamate 174 acts as the Proton acceptor in catalysis. The Zn(2+) site is built by glutamate 175, aspartate 197, and histidine 379.

The protein belongs to the peptidase M20B family. Zn(2+) serves as cofactor.

The protein localises to the cytoplasm. The catalysed reaction is Release of the N-terminal residue from a tripeptide.. Its function is as follows. Cleaves the N-terminal amino acid of tripeptides. The protein is Peptidase T of Vibrio atlanticus (strain LGP32) (Vibrio splendidus (strain Mel32)).